The sequence spans 329 residues: Tetraacyldisaccharide 4'-kinase (329 aa).

57–64 is an ATP binding site; the sequence is TAGGSGKT.

This sequence belongs to the LpxK family.

The enzyme catalyses a lipid A disaccharide + ATP = a lipid IVA + ADP + H(+). Its pathway is glycolipid biosynthesis; lipid IV(A) biosynthesis; lipid IV(A) from (3R)-3-hydroxytetradecanoyl-[acyl-carrier-protein] and UDP-N-acetyl-alpha-D-glucosamine: step 6/6. In terms of biological role, transfers the gamma-phosphate of ATP to the 4'-position of a tetraacyldisaccharide 1-phosphate intermediate (termed DS-1-P) to form tetraacyldisaccharide 1,4'-bis-phosphate (lipid IVA). The chain is Tetraacyldisaccharide 4'-kinase from Thiobacillus denitrificans (strain ATCC 25259 / T1).